The chain runs to 109 residues: Preprofallaxidin-8 (109 aa).

The N-terminal stretch at 1–22 is a signal peptide; that stretch reads MASLKKSLFLVLFLGLLSLSIC. Residues 23–46 constitute a propeptide that is removed on maturation; the sequence is EEQKRENEEDAEDENHEEESEEKR. A disordered region spans residues 27–46; that stretch reads RENEEDAEDENHEEESEEKR. Positions 30–42 are enriched in acidic residues; that stretch reads EEDAEDENHEEES. Residue L62 is modified to Leucine amide. Positions 66–70 are excised as a propeptide; the sequence is SEEKR. Position 75 is a methionine amide (M75). A propeptide spanning residues 79–83 is cleaved from the precursor; the sequence is SEEKR. Residue M88 is modified to Methionine amide. 2 propeptides span residues 92–96 and A108; that span reads SEEKR.

This sequence belongs to the frog skin active peptide (FSAP) family. Brevinin subfamily. In terms of tissue distribution, expressed by the skin glands.

It localises to the secreted. In terms of biological role, fallaxidin-2.1 shows no antibacterial activity against Gram-positive or Gram-negative bacteria. Does not inhibit the formation of NO by neuronal nitric oxide synthase. Has no effect on splenocyte proliferation or smooth muscle contraction. Fallaxidin-3.2 shows antibacterial activity against the Gram-positive bacteria E.faecalis (MIC=100 uM) and L.lactis (MIC=500 uM). No antibacterial activity against the Gram-positive bacteria B.cereus, L.innocua, M.luteus, S.epidermidis, S.uberis and S.aureus, or the Gram-negative bacteria E.cloacae and E.coli. The sequence is that of Preprofallaxidin-8 from Litoria fallax (Eastern dwarf tree frog).